The chain runs to 527 residues: Amino acid transporter heavy chain SLC3A2 (527 aa).

The segment at 1–31 (MSQDTEVDMKDVELNELEPEKQPMNAADGAA) is disordered. Topologically, residues 1-75 (MSQDTEVDMK…AGSPGWVRTR (75 aa)) are cytoplasmic. A Phosphoserine modification is found at Ser-2. Position 5 is a phosphothreonine (Thr-5). Residues 7–21 (VDMKDVELNELEPEK) show a composition bias toward basic and acidic residues. Lys-42 is covalently cross-linked (Glycyl lysine isopeptide (Lys-Gly) (interchain with G-Cter in ubiquitin)). Residue Ser-58 is modified to Phosphoserine. A Glycyl lysine isopeptide (Lys-Gly) (interchain with G-Cter in SUMO2) cross-link involves residue Lys-59. The helical; Signal-anchor for type II membrane protein transmembrane segment at 76 to 98 (WALLLLFWLGWLGMLAGAVVIIV) threads the bilayer. The Extracellular segment spans residues 99 to 527 (RAPRCRELPV…GLLLQFPFVA (429 aa)). N-linked (GlcNAc...) asparagine glycans are attached at residues Asn-166, Asn-249, Asn-259, and Asn-263. Residue Ser-300 is modified to Phosphoserine. N-linked (GlcNAc...) asparagine glycans are attached at residues Asn-318, Asn-386, and Asn-400. Ser-421 is modified (phosphoserine). Asn-510 carries an N-linked (GlcNAc...) asparagine glycan.

Belongs to the SLC3A transporter family. As to quaternary structure, disulfide-linked heterodimer with a non-glycosylated light chain (SLC7A5, SLC7A6, SLC7A7, SLC7A8, SLC7A10 or SLC7A11). Interacts with TLCD3A/CT120 and ICAM1. Constitutively and specifically associates with beta-1 integrins (alpha-2/beta-1, alpha-3/beta-1, alpha-5/beta-1 and alpha-6/beta-1), but minimally with alpha-4/beta-1. Interacts with LAPTM4B; recruits SLC3A2 and SLC7A5 to lysosomes to promote leucine uptake into these organelles and is required for mTORC1 activation. In terms of processing, phosphorylation on Ser-300 and on Ser-421 by ecto-protein kinases favors heterotypic cell-cell interactions. N-glycosylated; N-glycosylation is crucial for trafficking and stability of SLC3A2 to the plasma membrane. In brain expressed on capillary endothelia in cerebral cortex (at protein level). Highest expression in kidney, jejunum, ileum, colon, placenta, testis and spleen. Lower levels found in liver, lung and brain with weakest expression in heart. Expressed in retina, inner blood-retinal barrier of retina, retinal vascular endothelial cells. Also expressed in C6 glioma cells and in the retinal capillary endothelial cell line TR-iBRB2.

Its subcellular location is the apical cell membrane. The protein resides in the cell membrane. It is found in the cell junction. It localises to the lysosome membrane. The protein localises to the melanosome. Its subcellular location is the basolateral cell membrane. Functionally, acts as a chaperone that facilitates biogenesis and trafficking of functional transporters heterodimers to the plasma membrane. Forms heterodimer with SLC7 family transporters (SLC7A5, SLC7A6, SLC7A7, SLC7A8, SLC7A10 and SLC7A11), a group of amino-acid antiporters. Heterodimers function as amino acids exchangers, the specificity of the substrate depending on the SLC7A subunit. Heterodimers formed by SLC3A2/SLC7A6 or SLC3A2/SLC7A7 mediate the uptake of dibasic amino acids. Heterodimer SLC3A2/SLC7A11 functions as an antiporter by mediating the exchange of extracellular anionic L-cystine and intracellular L-glutamate across the cellular plasma membrane. SLC3A2/SLC7A10 translocates small neutral L- and D-amino acids across the plasma membrane. SLC3A2/SLC75 or SLC3A2/SLC7A8 translocates neutral amino acids with broad specificity, thyroid hormones and L-DOPA. SLC3A2 is essential for plasma membrane localization, stability, and the transport activity of SLC7A5 and SLC7A8. When associated with LAPTM4B, the heterodimer SLC7A5 is recruited to lysosomes to promote leucine uptake into these organelles, and thereby mediates mTORC1 activation. Modulates integrin-related signaling and is essential for integrin-dependent cell spreading, migration and tumor progression. The polypeptide is Amino acid transporter heavy chain SLC3A2 (Rattus norvegicus (Rat)).